The following is a 132-amino-acid chain: Acyl-CoA thioester hydrolase YciA (132 aa).

One can recognise a HotDog ACOT-type domain in the interval 8-123 (PQGDLVLRTL…LFKYVAVDPE (116 aa)).

The protein belongs to the acyl coenzyme A hydrolase family.

Catalyzes the hydrolysis of the thioester bond in palmitoyl-CoA and malonyl-CoA. This Escherichia coli O6:H1 (strain CFT073 / ATCC 700928 / UPEC) protein is Acyl-CoA thioester hydrolase YciA (yciA).